We begin with the raw amino-acid sequence, 137 residues long: Global transcriptional regulator Spx (137 aa).

Cys-10 and Cys-13 form a disulfide bridge.

This sequence belongs to the ArsC family. Spx subfamily. Interacts with the C-terminal domain of the alpha subunit of the RNAP.

The protein resides in the cytoplasm. In terms of biological role, global transcriptional regulator that plays a key role in stress response and exerts either positive or negative regulation of genes. Acts by interacting with the C-terminal domain of the alpha subunit of the RNA polymerase (RNAP). This interaction can enhance binding of RNAP to the promoter region of target genes and stimulate their transcription, or block interaction of RNAP with activator. The protein is Global transcriptional regulator Spx of Streptococcus agalactiae serotype III (strain NEM316).